We begin with the raw amino-acid sequence, 290 residues long: Nitrogenase iron protein 2 (290 aa).

Residue 10–17 (GKGGIGKS) participates in ATP binding. C98 contacts [4Fe-4S] cluster. R101 bears the ADP-ribosylarginine; by dinitrogenase reductase ADP-ribosyltransferase mark. C133 is a binding site for [4Fe-4S] cluster.

It belongs to the NifH/BchL/ChlL family. Homodimer. The cofactor is [4Fe-4S] cluster. In terms of processing, the reversible ADP-ribosylation of Arg-101 inactivates the nitrogenase reductase and regulates nitrogenase activity.

It carries out the reaction N2 + 8 reduced [2Fe-2S]-[ferredoxin] + 16 ATP + 16 H2O = H2 + 8 oxidized [2Fe-2S]-[ferredoxin] + 2 NH4(+) + 16 ADP + 16 phosphate + 6 H(+). Functionally, the key enzymatic reactions in nitrogen fixation are catalyzed by the nitrogenase complex, which has 2 components: the iron protein (component 2) and a component 1 which is either a molybdenum-iron protein, a vanadium-iron, or an iron-iron protein. The polypeptide is Nitrogenase iron protein 2 (vnfH) (Azotobacter vinelandii).